The chain runs to 249 residues: Hydroxyacylglutathione hydrolase (249 aa).

Zn(2+) is bound by residues His54, His56, Asp58, His59, His113, Asp138, and His176.

Belongs to the metallo-beta-lactamase superfamily. Glyoxalase II family. In terms of assembly, monomer. Requires Zn(2+) as cofactor.

It carries out the reaction an S-(2-hydroxyacyl)glutathione + H2O = a 2-hydroxy carboxylate + glutathione + H(+). Its pathway is secondary metabolite metabolism; methylglyoxal degradation; (R)-lactate from methylglyoxal: step 2/2. Functionally, thiolesterase that catalyzes the hydrolysis of S-D-lactoyl-glutathione to form glutathione and D-lactic acid. The chain is Hydroxyacylglutathione hydrolase from Parasynechococcus marenigrum (strain WH8102).